The chain runs to 345 residues: MDTYDSQGPTSRRRTSNLKDYFVSATPLQKRLKLARRQSSVFPSPSRRKIPQCSQLQEDIDPQKVAFLLHKQWTVYSLTPLYKFSYSNLKDYSRLLSAFIAAEKQKGLAVEVGEDFNIKVIFSTLLGVKGTQRDPEAFLVQIRSESQSSREHRQDKVLWTGWFCCVFGENLQETVSEDFTCLPLFLAHGAESNTSLIGGWFQKTFDCCFSPLAISAFNLSWMAAMWTACKMDHYMATTEFFWSVPCSPQSLDISYAIHPEDAKALWDSVHKTPGEVTQEEVDLFMNCLYSHFHRHFRIHLSATRLVRVSTSVASAHTDGKIKILCHKYLIGVLAYMTELAIFQIE.

2 positions are modified to phosphoserine: Ser-40 and Ser-54.

The protein belongs to the CENP-L/IML3 family. As to quaternary structure, component of the CENPA-CAD complex, composed of CENPI, CENPK, CENPL, CENPO, CENPP, CENPQ, CENPR and CENPS. The CENPA-CAD complex interacts with the CENPA-NAC complex, at least composed of CENPA, CENPC, CENPH, CENPM, CENPN, CENPT and CENPU.

It is found in the nucleus. The protein localises to the chromosome. The protein resides in the centromere. Its function is as follows. Component of the CENPA-CAD (nucleosome distal) complex, a complex recruited to centromeres which is involved in assembly of kinetochore proteins, mitotic progression and chromosome segregation. May be involved in incorporation of newly synthesized CENPA into centromeres via its interaction with the CENPA-NAC complex. This is Centromere protein L (Cenpl) from Rattus norvegicus (Rat).